Here is a 474-residue protein sequence, read N- to C-terminus: Cobyric acid synthase (474 aa).

The GATase cobBQ-type domain maps to 251–431 (TGFVAIPRLP…LHGLLENSAY (181 aa)). Cys-328 functions as the Nucleophile in the catalytic mechanism. Residue His-423 is part of the active site.

It belongs to the CobB/CobQ family. CobQ subfamily.

The protein operates within cofactor biosynthesis; adenosylcobalamin biosynthesis. Catalyzes amidations at positions B, D, E, and G on adenosylcobyrinic A,C-diamide. NH(2) groups are provided by glutamine, and one molecule of ATP is hydrogenolyzed for each amidation. The protein is Cobyric acid synthase of Deinococcus radiodurans (strain ATCC 13939 / DSM 20539 / JCM 16871 / CCUG 27074 / LMG 4051 / NBRC 15346 / NCIMB 9279 / VKM B-1422 / R1).